A 40-amino-acid polypeptide reads, in one-letter code: Toxin CSTX-17 (40 aa).

4 disulfides stabilise this stretch: C2-C17, C9-C22, C16-C33, and C24-C31. Residue W40 is modified to Tryptophan amide.

In terms of processing, contains 4 disulfide bonds. Expressed by the venom gland.

It localises to the secreted. This Cupiennius salei (American wandering spider) protein is Toxin CSTX-17.